A 237-amino-acid polypeptide reads, in one-letter code: Ribonuclease PH (237 aa).

Residues Arg-86 and 124–126 (GTR) each bind phosphate.

Belongs to the RNase PH family. As to quaternary structure, homohexameric ring arranged as a trimer of dimers.

The enzyme catalyses tRNA(n+1) + phosphate = tRNA(n) + a ribonucleoside 5'-diphosphate. Functionally, phosphorolytic 3'-5' exoribonuclease that plays an important role in tRNA 3'-end maturation. Removes nucleotide residues following the 3'-CCA terminus of tRNAs; can also add nucleotides to the ends of RNA molecules by using nucleoside diphosphates as substrates, but this may not be physiologically important. Probably plays a role in initiation of 16S rRNA degradation (leading to ribosome degradation) during starvation. The sequence is that of Ribonuclease PH from Bradyrhizobium sp. (strain BTAi1 / ATCC BAA-1182).